Here is a 245-residue protein sequence, read N- to C-terminus: Orotidine 5'-phosphate decarboxylase (245 aa).

Residues Asp22, Lys44, 71-80 (DLKFHDIPNT), Thr131, Arg192, Gln201, Gly221, and Arg222 each bind substrate. Lys73 serves as the catalytic Proton donor.

Belongs to the OMP decarboxylase family. Type 1 subfamily. Homodimer.

It catalyses the reaction orotidine 5'-phosphate + H(+) = UMP + CO2. It functions in the pathway pyrimidine metabolism; UMP biosynthesis via de novo pathway; UMP from orotate: step 2/2. In terms of biological role, catalyzes the decarboxylation of orotidine 5'-monophosphate (OMP) to uridine 5'-monophosphate (UMP). The chain is Orotidine 5'-phosphate decarboxylase from Salmonella typhi.